A 963-amino-acid polypeptide reads, in one-letter code: Importin-13 (963 aa).

20 HEAT repeats span residues Glu24–Val54, Pro56–Arg88, Thr95–Met135, Ala142–Thr179, Leu194–Gln231, Leu236–Ser268, Val276–Asp325, Trp330–Leu372, Glu375–Leu438, Ala440–Ile476, Val487–Asp522, Pro524–Cys558, Leu562–Ala600, Val603–Phe648, Pro676–Leu716, Phe720–Phe754, Phe761–Arg803, Val815–Leu845, Glu860–Asn893, and Phe897–Leu931. One can recognise an Importin N-terminal domain in the interval Ala45–Arg111.

Belongs to the importin beta family. Interacts with UBC9, RAN, RBM8A, eIF-1A and PAX6.

It localises to the cytoplasm. The protein resides in the nucleus. Functionally, functions in nuclear protein import as nuclear transport receptor. Serves as receptor for nuclear localization signals (NLS) in cargo substrates. Is thought to mediate docking of the importin/substrate complex to the nuclear pore complex (NPC) through binding to nucleoporin and the complex is subsequently translocated through the pore by an energy requiring, Ran-dependent mechanism. At the nucleoplasmic side of the NPC, Ran binds to the importin, the importin/substrate complex dissociates and importin is re-exported from the nucleus to the cytoplasm where GTP hydrolysis releases Ran. The directionality of nuclear import is thought to be conferred by an asymmetric distribution of the GTP- and GDP-bound forms of Ran between the cytoplasm and nucleus. Mediates the nuclear import of UBC9, the RBM8A/MAGOH complex, PAX6 and probably other members of the paired homeobox family. Also mediates nuclear export of eIF-1A, and the cytoplasmic release of eIF-1A is triggered by the loading of import substrates onto IPO13. The polypeptide is Importin-13 (IPO13) (Pongo abelii (Sumatran orangutan)).